A 188-amino-acid chain; its full sequence is Ribosome hibernation promotion factor (188 aa).

The segment at 93–125 (KTRVNRKKRKESEHEPFPATPETPPETAVDHDK) is disordered.

It belongs to the HPF/YfiA ribosome-associated protein family. Long HPF subfamily. In terms of assembly, interacts with 100S ribosomes.

Its subcellular location is the cytoplasm. In terms of biological role, required for dimerization of active 70S ribosomes into 100S ribosomes in stationary phase; 100S ribosomes are translationally inactive and sometimes present during exponential growth. The chain is Ribosome hibernation promotion factor from Staphylococcus carnosus (strain TM300).